The following is a 109-amino-acid chain: Mitochondrial pyruvate carrier 1 (109 aa).

The residue at position 2 (Ala-2) is an N-acetylalanine. Residues 2–20 (AGALVRKAADYVRSKDFRD) are Mitochondrial matrix-facing. Residues 21 to 41 (YLMSTHFWGPVANWGLPIAAI) form a helical membrane-spanning segment. The Mother cell cytoplasmic segment spans residues 42-52 (NDMKKSPEIIS). Residues 53–71 (GRMTFALCCYSLTFMRFAY) form a helical membrane-spanning segment. An N6-acetyllysine modification is found at Lys-72. Over 72–109 (KVQPRNWLLFACHATNEVAQLIQGGRLIRHEMSKKASA) the chain is Mitochondrial matrix.

Homodimer. Forms heterodimer with MPC2. The heterodimer is the more stable and dominant form.

It localises to the mitochondrion inner membrane. It carries out the reaction pyruvate(out) + H(+)(out) = pyruvate(in) + H(+)(in). Its function is as follows. Mediates the uptake of pyruvate into mitochondria. This is Mitochondrial pyruvate carrier 1 (MPC1) from Bos taurus (Bovine).